The following is a 179-amino-acid chain: Large ribosomal subunit protein uL6 (179 aa).

The protein belongs to the universal ribosomal protein uL6 family. As to quaternary structure, part of the 50S ribosomal subunit.

Its function is as follows. This protein binds to the 23S rRNA, and is important in its secondary structure. It is located near the subunit interface in the base of the L7/L12 stalk, and near the tRNA binding site of the peptidyltransferase center. The protein is Large ribosomal subunit protein uL6 of Clostridium novyi (strain NT).